A 306-amino-acid chain; its full sequence is Arginase (306 aa).

Positions 96, 123, 125, and 127 each coordinate Mn(2+). Substrate is bound by residues 125-129 (HTDFH), 136-138 (SGN), and Asp178. Residues Asp226 and Asp228 each contribute to the Mn(2+) site. Substrate-binding residues include Thr240 and Glu271.

This sequence belongs to the arginase family. Mn(2+) is required as a cofactor.

It carries out the reaction L-arginine + H2O = urea + L-ornithine. The protein operates within nitrogen metabolism; urea cycle; L-ornithine and urea from L-arginine: step 1/1. In Brucella abortus biovar 1 (strain 9-941), this protein is Arginase (arcB).